The sequence spans 238 residues: Purine nucleoside phosphorylase DeoD-type 1 (238 aa).

His5 serves as a coordination point for a purine D-ribonucleoside. Phosphate-binding positions include Gly21, Arg25, Arg44, and 88–91 (RVGS). A purine D-ribonucleoside is bound by residues 180–182 (EME) and 204–205 (SD). Asp205 acts as the Proton donor in catalysis.

It belongs to the PNP/UDP phosphorylase family. As to quaternary structure, homohexamer; trimer of homodimers.

It catalyses the reaction a purine D-ribonucleoside + phosphate = a purine nucleobase + alpha-D-ribose 1-phosphate. The catalysed reaction is a purine 2'-deoxy-D-ribonucleoside + phosphate = a purine nucleobase + 2-deoxy-alpha-D-ribose 1-phosphate. Its function is as follows. Catalyzes the reversible phosphorolytic breakdown of the N-glycosidic bond in the beta-(deoxy)ribonucleoside molecules, with the formation of the corresponding free purine bases and pentose-1-phosphate. The protein is Purine nucleoside phosphorylase DeoD-type 1 of Aliivibrio fischeri (strain ATCC 700601 / ES114) (Vibrio fischeri).